A 396-amino-acid polypeptide reads, in one-letter code: Zinc metalloproteinase nas-19 (396 aa).

The signal sequence occupies residues 1–20 (MVRLIHLIGAIILLFSYAYC). The Peptidase M12A domain occupies 38–231 (RVKRQFERLG…YKINQYYGCW (194 aa)). The N-linked (GlcNAc...) asparagine glycan is linked to asparagine 79. Intrachain disulfides connect cysteine 82-cysteine 230, cysteine 105-cysteine 130, cysteine 232-cysteine 252, and cysteine 254-cysteine 263. Residue histidine 138 participates in Zn(2+) binding. Glutamate 139 is an active-site residue. 2 residues coordinate Zn(2+): histidine 142 and histidine 148. Residues 225-264 (NQYYGCWCSKQLECKNGGYTSPSDCSRCNCPKGFFGNLCD) form the EGF-like domain. Residue asparagine 310 is glycosylated (N-linked (GlcNAc...) asparagine).

Requires Zn(2+) as cofactor.

It is found in the secreted. Its function is as follows. Metalloprotease. This is Zinc metalloproteinase nas-19 (nas-19) from Caenorhabditis elegans.